We begin with the raw amino-acid sequence, 137 residues long: Large ribosomal subunit protein uL16 (137 aa).

Belongs to the universal ribosomal protein uL16 family. Part of the 50S ribosomal subunit.

Its function is as follows. Binds 23S rRNA and is also seen to make contacts with the A and possibly P site tRNAs. This chain is Large ribosomal subunit protein uL16, found in Psychrobacter cryohalolentis (strain ATCC BAA-1226 / DSM 17306 / VKM B-2378 / K5).